The following is a 41-amino-acid chain: Large ribosomal subunit protein bL36 (41 aa).

It belongs to the bacterial ribosomal protein bL36 family.

This is Large ribosomal subunit protein bL36 from Hyphomonas neptunium (strain ATCC 15444).